The primary structure comprises 768 residues: Polyadenylate-binding protein, cytoplasmic and nuclear (768 aa).

The span at 1 to 11 shows a compositional bias: polar residues; sequence MSAETATNPPV. Residues 1–52 form a disordered region; it reads MSAETATNPPVDTTPGAAPESATNGSNANVAADTTAGEASQTTSSTTPTAQP. Over residues 39–52 the composition is skewed to low complexity; that stretch reads ASQTTSSTTPTAQP. 4 consecutive RRM domains span residues 55–133, 143–220, 236–314, and 340–470; these read ASLY…WSQR, GNVF…HHIA, TNVY…RAQK, and VNLY…LAQR. Disordered stretches follow at residues 374 to 428, 633 to 662, and 739 to 768; these read DFAP…EKKP, QQGM…NASP, and KNKG…ETKS. A compositionally biased stretch (gly residues) spans 637 to 646; it reads GRPGQAGRGQ. Positions 662–739 constitute a PABC domain; that stretch reads PNGLTLQVLN…ALTVYDEYVK (78 aa). A compositionally biased stretch (basic and acidic residues) spans 753-768; that stretch reads NKSKDASQETAEETKS.

It belongs to the polyadenylate-binding protein type-1 family.

The protein localises to the cytoplasm. Its subcellular location is the nucleus. Functionally, binds the poly(A) tail of mRNA. Appears to be an important mediator of the multiple roles of the poly(A) tail in mRNA biogenesis, stability and translation. In the nucleus, involved in both mRNA cleavage and polyadenylation. Is also required for efficient mRNA export to the cytoplasm. Acts in concert with a poly(A)-specific nuclease (PAN) to affect poly(A) tail shortening, which may occur concomitantly with either nucleocytoplasmic mRNA transport or translational initiation. In the cytoplasm, stimulates translation initiation and regulates mRNA decay through translation termination-coupled poly(A) shortening, probably mediated by PAN. In Coccidioides immitis (strain RS) (Valley fever fungus), this protein is Polyadenylate-binding protein, cytoplasmic and nuclear (PAB1).